We begin with the raw amino-acid sequence, 216 residues long: Pyridoxine/pyridoxamine 5'-phosphate oxidase (216 aa).

FMN contacts are provided by residues 65–70 (RMVLLK), 80–81 (YT), Arg-86, Lys-87, and Gln-109. Lys-70 lines the substrate pocket. Residues Tyr-127, Arg-131, and Ser-135 each contribute to the substrate site. FMN is bound by residues 144–145 (QS) and Trp-189. 195–197 (RLH) is a substrate binding site. FMN is bound at residue Arg-199.

Belongs to the pyridoxamine 5'-phosphate oxidase family. In terms of assembly, homodimer. It depends on FMN as a cofactor.

It carries out the reaction pyridoxamine 5'-phosphate + O2 + H2O = pyridoxal 5'-phosphate + H2O2 + NH4(+). It catalyses the reaction pyridoxine 5'-phosphate + O2 = pyridoxal 5'-phosphate + H2O2. Its pathway is cofactor metabolism; pyridoxal 5'-phosphate salvage; pyridoxal 5'-phosphate from pyridoxamine 5'-phosphate: step 1/1. It functions in the pathway cofactor metabolism; pyridoxal 5'-phosphate salvage; pyridoxal 5'-phosphate from pyridoxine 5'-phosphate: step 1/1. Its function is as follows. Catalyzes the oxidation of either pyridoxine 5'-phosphate (PNP) or pyridoxamine 5'-phosphate (PMP) into pyridoxal 5'-phosphate (PLP). The polypeptide is Pyridoxine/pyridoxamine 5'-phosphate oxidase (Sphingopyxis alaskensis (strain DSM 13593 / LMG 18877 / RB2256) (Sphingomonas alaskensis)).